Consider the following 147-residue polypeptide: 3-dehydroquinate dehydratase (147 aa).

The Proton acceptor role is filled by Tyr-22. Substrate contacts are provided by Asn-73, His-79, and Asp-86. The active-site Proton donor is the His-99. Substrate-binding positions include 100-101 and Arg-110; that span reads LS.

The protein belongs to the type-II 3-dehydroquinase family. As to quaternary structure, homododecamer.

The catalysed reaction is 3-dehydroquinate = 3-dehydroshikimate + H2O. Its pathway is metabolic intermediate biosynthesis; chorismate biosynthesis; chorismate from D-erythrose 4-phosphate and phosphoenolpyruvate: step 3/7. Functionally, catalyzes a trans-dehydration via an enolate intermediate. This chain is 3-dehydroquinate dehydratase, found in Synechococcus sp. (strain WH7803).